Consider the following 292-residue polypeptide: Ribosomal RNA small subunit methyltransferase A (292 aa).

Residues Asn-29, Leu-31, Gly-56, Glu-77, Asp-102, and Asn-127 each coordinate S-adenosyl-L-methionine.

This sequence belongs to the class I-like SAM-binding methyltransferase superfamily. rRNA adenine N(6)-methyltransferase family. RsmA subfamily.

It is found in the cytoplasm. The enzyme catalyses adenosine(1518)/adenosine(1519) in 16S rRNA + 4 S-adenosyl-L-methionine = N(6)-dimethyladenosine(1518)/N(6)-dimethyladenosine(1519) in 16S rRNA + 4 S-adenosyl-L-homocysteine + 4 H(+). In terms of biological role, specifically dimethylates two adjacent adenosines (A1518 and A1519) in the loop of a conserved hairpin near the 3'-end of 16S rRNA in the 30S particle. May play a critical role in biogenesis of 30S subunits. The chain is Ribosomal RNA small subunit methyltransferase A from Bacillus licheniformis (strain ATCC 14580 / DSM 13 / JCM 2505 / CCUG 7422 / NBRC 12200 / NCIMB 9375 / NCTC 10341 / NRRL NRS-1264 / Gibson 46).